Reading from the N-terminus, the 274-residue chain is MTVYTPTSERQAPATTHRQMWALGDYAAIAEELLAPLGPILVSTSGIRRGDRVLDVAAGSGNVSIPAAMAGAHVTASDLTPELLRRAQARAAAAGLELGWREANAEALPFSAGEFDAVLSTIGVMFAPRHQRTADELARVCRRGGKISTLNWTPEGFYGKLLSTIRPYRPTLPAGAPHEVWWGSEDYVSGLFRDHVSDIRTRRGSLTVDRFGCPDECRDYFKNFYGPAINAYRSIADSPECVATLDAEITELCREYLCDGVMQWEYLIFTARKC.

Residues 1 to 30 (MTVYTPTSERQAPATTHRQMWALGDYAAIA) form the signal peptide.

This sequence to M.tuberculosis Rv1405c.

This is an uncharacterized protein from Mycobacterium tuberculosis (strain CDC 1551 / Oshkosh).